The sequence spans 87 residues: Toxin Cll4 (87 aa).

The signal sequence occupies residues methionine 1–alanine 19. The LCN-type CS-alpha/beta domain occupies lysine 20 to asparagine 85. Intrachain disulfides connect cysteine 31/cysteine 84, cysteine 35/cysteine 60, cysteine 44/cysteine 65, and cysteine 48/cysteine 67. Position 85 is an asparagine amide (asparagine 85).

The protein belongs to the long (4 C-C) scorpion toxin superfamily. Sodium channel inhibitor family. Beta subfamily. Expressed by the venom gland.

The protein localises to the secreted. Beta toxins bind voltage-independently at site-4 of sodium channels (Nav) and shift the voltage of activation toward more negative potentials thereby affecting sodium channel activation and promoting spontaneous and repetitive firing. In Centruroides limpidus (Mexican scorpion), this protein is Toxin Cll4.